Reading from the N-terminus, the 48-residue chain is SPbeta prophage-derived uncharacterized protein YotE (48 aa).

In Bacillus subtilis (strain 168), this protein is SPbeta prophage-derived uncharacterized protein YotE (yotE).